The sequence spans 485 residues: Probable protein phosphatase 2C 3 (485 aa).

The segment covering 1–11 (MSSPSPSSEAA) has biased composition (low complexity). Disordered regions lie at residues 1–29 (MSSP…AAGG) and 43–72 (ARAE…AEGG). The span at 13-23 (AHHHHHQRRQH) shows a compositional bias: basic residues. Residues 107-353 (SSSSSSSLAS…DDTTCIVVDM (247 aa)) form the PPM-type phosphatase domain. Mn(2+)-binding residues include Asp129, Gly130, Asp305, and Asp344.

The protein belongs to the PP2C family. Mg(2+) is required as a cofactor. Mn(2+) serves as cofactor.

It catalyses the reaction O-phospho-L-seryl-[protein] + H2O = L-seryl-[protein] + phosphate. The enzyme catalyses O-phospho-L-threonyl-[protein] + H2O = L-threonyl-[protein] + phosphate. This is Probable protein phosphatase 2C 3 from Oryza sativa subsp. japonica (Rice).